A 504-amino-acid polypeptide reads, in one-letter code: Putative BTB/POZ domain-containing protein R842 (504 aa).

The region spanning 21–91 (SDVKLILKDN…FYGFKSPSVT (71 aa)) is the BTB domain.

This sequence belongs to the mimivirus BTB/WD family.

This chain is Putative BTB/POZ domain-containing protein R842, found in Acanthamoeba polyphaga (Amoeba).